We begin with the raw amino-acid sequence, 106 residues long: MVEENKIVKKVIVTKKPTIKKAPVKAAFKKEVVVKNATVIKKTQTSSKRNTVNITLVKSFHGRLPSHRATIVGLGLKRINHIKELKDTPEIRGMINKVAYLLKVED.

It belongs to the universal ribosomal protein uL30 family. In terms of assembly, part of the 50S ribosomal subunit.

The protein is Large ribosomal subunit protein uL30 of Ruthia magnifica subsp. Calyptogena magnifica.